Consider the following 325-residue polypeptide: Coiled-coil domain-containing protein 160 (325 aa).

Disordered stretches follow at residues 18–45 (SAQD…KGME) and 81–123 (ENKR…CSTD). Over residues 81-91 (ENKRNISKNET) the composition is skewed to basic and acidic residues. Polar residues predominate over residues 92–123 (DTNSASYESSNVDVTTEESFNSTEDNSTCSTD). Residues 144–288 (KLCLNLLNEE…SVIKNELRTE (145 aa)) are a coiled coil.

This sequence belongs to the CCDC160 family.

This is Coiled-coil domain-containing protein 160 (CCDC160) from Homo sapiens (Human).